Here is a 421-residue protein sequence, read N- to C-terminus: Putative hydro-lyase KRH_21160 (421 aa).

Disordered stretches follow at residues Thr200–Thr298 and Thr312–Arg421. Over residues Gly224–Arg237 the composition is skewed to basic residues. Composition is skewed to low complexity over residues Pro243–Pro260 and Ser370–Ala380.

Belongs to the D-glutamate cyclase family.

The sequence is that of Putative hydro-lyase KRH_21160 from Kocuria rhizophila (strain ATCC 9341 / DSM 348 / NBRC 103217 / DC2201).